The primary structure comprises 358 residues: MQLRSALMTGVARRTIFEPALTLSPEVVAWINDIAASRGPFQSRVGDKPLSVSMEGLVWQHESSAIPMFDCVWDLGGETVVLSLSRPLVEALVSTVQSGLAFPTEPTASLILELALEPLIARLEDKTNRTLHLLRVGKAITLAPYVELEIVIGPVSGKGRLFLFSPLDGLVPFAFRALAELLAQLPRQPRELSPELPVIIAGEIGTLRASAALLRKASVGDALLPDISPFGRGQIALSVGQLWTRADLEGDHLVLRGPFRPQSRPLECAHMTEIESQLRPSDADLDDIEIVLVFECGRWPISLGELRSAGDGHVFELGRPIDGLVDIVANGRCIGRGDIVRIGDDLGIRLRGRLACND.

It belongs to the FliN/MopA/SpaO family.

Its function is as follows. Could be involved in the secretion of an unknown factor. The chain is Probable translocation protein Y4yK from Sinorhizobium fredii (strain NBRC 101917 / NGR234).